Here is a 504-residue protein sequence, read N- to C-terminus: GTPase Der (504 aa).

Residues 4 to 168 enclose the EngA-type G 1 domain; sequence PVVALVGRPN…QVLAPFAEKM (165 aa). GTP-binding positions include 10-17, 57-61, and 120-123; these read GRPNVGKS, DTGGI, and NKTD. A compositionally biased stretch (basic and acidic residues) spans 168-179; that stretch reads MENADENDRTSE. Residues 168–191 form a disordered region; that stretch reads MENADENDRTSEEEQDEWEQEFDF. Positions 180–191 are enriched in acidic residues; it reads EEQDEWEQEFDF. An EngA-type G 2 domain is found at 216–389; sequence IKIAIVGRPN…SIKEAYACAT (174 aa). Residues 222–229, 269–273, and 334–337 each bind GTP; these read GRPNVGKS, DTAGV, and NKWD. The 85-residue stretch at 390-474 folds into the KH-like domain; sequence QKMTTSLLTR…PIRLLFQEGS (85 aa).

The protein belongs to the TRAFAC class TrmE-Era-EngA-EngB-Septin-like GTPase superfamily. EngA (Der) GTPase family. Associates with the 50S ribosomal subunit.

Functionally, GTPase that plays an essential role in the late steps of ribosome biogenesis. The chain is GTPase Der from Haemophilus influenzae (strain ATCC 51907 / DSM 11121 / KW20 / Rd).